A 971-amino-acid chain; its full sequence is MEEKQKSLSPPPCPSTVTVRRNPPRRARATPFTTTTKPPLSSLACAKPHDVPTFPIDEILSIQIPQSEPKPAIAESLKIFLRIKPLRTFTKVTTTTKSRPRNVWPQNPSKKNNAKENRNPEITKKVRKKDEEACITLNDSYSVTLTPPQSLQELKRSKTEVYEGFSHVFPADCSQNDVYDKMVQPLLEDFMKGKSGMLAALGPSGSGKTHTVFGSLKDPGIVPITLRQIFKKNDESCSGSLRSFNLSIFEICSERGKGEKAYDLLGGESSELSVQQSTIRGLKEVPIQNLEEAESLIGQAMLKRATATTNSNSQSSRSQCIINIRASCNGFSNETKLQSSDAMLTIVDLAGAEREKRTGNQAIDFGLPGTDPYFILFLMPTIPLTMNTRYLLAVTVGVPEEPKEGIAETSSKFFGSLTRYLRDYLEGKKRMALILTVKAGEEDYLDTSYLLRQASPYMKIKFDNTEEPCNKRQLKTFPRAEKNKKIKLSAPKTSQIEENFQGERCQISQEVNLQGKKADPTDRSSPRLEHVAQDKNEREHIIMRNFSKVLWNVLKQCNEKLKVAEGEIFTLKDSLRREQLKSLGLETELISLKSSCLAQPCIPEVEVIVNAKEHFEVDAALTNERNVDDDSCNLIKARREAGAEESSETPVPKVVRNVDDDSCNLIKARREAGAEESSESPVLSVLRNVDDDSCNLIEARREAGSEESSKSPVPNVRNVDVDSCNLINPRREASTEESSESPVLSKNVKDAELVPCHLSSENDAEPRQSVNSEENVGIPSTITHVEAEVTDFQRDQNQDDPTPSPEQVEVSQDCINSGLSNVQTKSAISRRFPDSEKQERNRRLLPASSRSLTEEMNDLEIKDIQTEKQQVKTTNTRVQKKAVSIQGQETEVPPREAEPASTKKQKNGQKPKRRLQPASSVLLTREINTLEIEDDIAEPKVNRGGKKTTVSQPRSQGSVTLLRLLTNNLHL.

2 disordered regions span residues 1 to 44 (MEEK…SSLA) and 93 to 121 (TTTT…RNPE). Positions 29 to 39 (ATPFTTTTKPP) are enriched in low complexity. Residues 76 to 460 (SLKIFLRIKP…LRQASPYMKI (385 aa)) form the Kinesin motor domain. 202 to 209 (GPSGSGKT) contributes to the ATP binding site. Positions 700–709 (RREAGSEESS) are enriched in basic and acidic residues. 2 disordered regions span residues 700-856 (RREA…TEEM) and 872-917 (KTTN…RLQP). A compositionally biased stretch (polar residues) spans 768 to 783 (QSVNSEENVGIPSTIT). Basic and acidic residues predominate over residues 785 to 797 (VEAEVTDFQRDQN). The segment covering 809–827 (EVSQDCINSGLSNVQTKSA) has biased composition (polar residues). Over residues 831-842 (RFPDSEKQERNR) the composition is skewed to basic and acidic residues. Residues 903 to 915 (KKQKNGQKPKRRL) are compositionally biased toward basic residues.

The protein belongs to the TRAFAC class myosin-kinesin ATPase superfamily. Kinesin family. KIN-6 subfamily.

The polypeptide is Kinesin-like protein KIN-6 (Arabidopsis thaliana (Mouse-ear cress)).